Here is a 513-residue protein sequence, read N- to C-terminus: MPGLGRRAQWLCWWWGLLCSCCGPPPLRPPLPAAAAAAAGGQLLGDGGSPGRTEQPPPSPQSSSGFLYRRLKTQEKREMQKEILSVLGLPHRPRPLHGLQQPQPPALRQQEEQQQQQQLPRGEPPPGRLKSAPLFMLDLYNALSADNDEDGASEGERQQSWPHEAASSSQRRQPPPGAAHPLNRKSLLAPGSGSGGASPLTSAQDSAFLNDADMVMSFVNLVEYDKEFSPRQRHHKEFKFNLSQIPEGEVVTAAEFRIYKDCVMGSFKNQTFLISIYQVLQEHQHRDSDLFLLDTRVVWASEEGWLEFDITATSNLWVVTPQHNMGLQLSVVTRDGVHVHPRAAGLVGRDGPYDKQPFMVAFFKVSEVHVRTTRSASSRRRQQSRNRSTQSQDVARVSSASDYNSSELKTACRKHELYVSFQDLGWQDWIIAPKGYAANYCDGECSFPLNAHMNATNHAIVQTLVHLMNPEYVPKPCCAPTKLNAISVLYFDDNSNVILKKYRNMVVRACGCH.

The first 20 residues, 1–20, serve as a signal peptide directing secretion; the sequence is MPGLGRRAQWLCWWWGLLCS. A propeptide spanning residues 21–374 is cleaved from the precursor; the sequence is CCGPPPLRPP…VSEVHVRTTR (354 aa). Disordered regions lie at residues 38 to 66, 89 to 131, and 145 to 200; these read AAGG…SSGF, LPHR…RLKS, and ADND…ASPL. Over residues 98–121 the composition is skewed to low complexity; it reads GLQQPQPPALRQQEEQQQQQQLPR. Positions 158–172 are enriched in polar residues; the sequence is QQSWPHEAASSSQRR. N-linked (GlcNAc...) asparagine glycosylation is found at Asn241, Asn269, Asn386, Asn404, and Asn454. The tract at residues 373–398 is disordered; the sequence is TRSASSRRRQQSRNRSTQSQDVARVS. 3 cysteine pairs are disulfide-bonded: Cys412–Cys478, Cys441–Cys510, and Cys445–Cys512.

It belongs to the TGF-beta family. Interacts with SOSTDC1. Interacts (when glycosylated) with type I receptor ACVR1; the interaction may induce HAMP expression. Interacts with type II receptor ACVR2B. Interacts with Hemojuvelin/HJV. Interacts with ERFE; the interaction inhibits BMP-induced transcription of HAMP. Interacts with BMPR1A/ALK3. Forms heterodimers with BMP2 in vitro; the heterodimer then binds to its receptor BMPR1A /ALK3 and may induce HAMP expression. Glycosylated at Asn-454. Glycosylation is crucial for recognition by the activin receptor type I/ACVR1.

The protein localises to the secreted. In terms of biological role, growth factor of the TGF-beta superfamily that plays essential roles in many developmental processes including cartilage and bone formation. Also plays an important role in the regulation of HAMP/hepcidin expression and iron metabolism by acting as a ligand for hemojuvelin/HJV. Also acts to promote expression of HAMP, potentially via the interaction with its receptor BMPR1A/ALK3. Initiates the canonical BMP signaling cascade by associating with type I receptor ACVR1 and type II receptor ACVR2B. In turn, ACVR1 propagates signal by phosphorylating SMAD1/5/8 that travel to the nucleus and act as activators and repressors of transcription of target. Can also signal through non-canonical pathway such as TAZ-Hippo signaling cascade to modulate VEGF signaling by regulating VEGFR2 expression. In Homo sapiens (Human), this protein is Bone morphogenetic protein 6 (BMP6).